The following is an 898-amino-acid chain: Pyruvate, phosphate dikinase (898 aa).

An N-terminal region spans residues 1 to 355 (MAKWVYTFGA…LWMLQTRSGK (355 aa)). Arginine 96 contributes to the ATP binding site. The tract at residues 356-412 (RTAKSALKIAVDMAEEGLISKEEAVARIDPASLDQLLHPTIDPHARRDIIGSGLPAS) is linker 1. A central region spans residues 413-511 (PGAATGEIVF…TLRKGDVITI (99 aa)). Residue threonine 466 is modified to Phosphothreonine; by PDRP1. Histidine 468 functions as the Tele-phosphohistidine intermediate in the catalytic mechanism. Residues 512–546 (DGSSGQVLKGEIPMLQPELSGDFGKIMQWADASRR) form a linker 2 region. The segment at 547 to 898 (MTVRTNAETP…VAEVQALAAS (352 aa)) is C-terminal. Substrate contacts are provided by arginine 574, arginine 630, glutamate 758, glycine 779, threonine 780, asparagine 781, and aspartate 782. Glutamate 758 contributes to the Mg(2+) binding site. Aspartate 782 is a Mg(2+) binding site. Residue cysteine 844 is the Proton donor of the active site.

Belongs to the PEP-utilizing enzyme family. Homodimer. It depends on Mg(2+) as a cofactor. Phosphorylation of Thr-466 in the dark inactivates the enzyme. Dephosphorylation upon light stimulation reactivates the enzyme.

It catalyses the reaction pyruvate + phosphate + ATP = phosphoenolpyruvate + AMP + diphosphate + H(+). With respect to regulation, activated by light-induced dephosphorylation. Inhibited by dark-induced phosphorylation. Both reactions are catalyzed by PDRP1. Functionally, catalyzes the reversible phosphorylation of pyruvate and phosphate. This chain is Pyruvate, phosphate dikinase (ppdK), found in Rhizobium meliloti (strain 1021) (Ensifer meliloti).